The sequence spans 278 residues: Small ribosomal subunit protein uS3 (278 aa).

In terms of domain architecture, KH type-2 spans 38 to 106; it reads IRKLLATGLE…QVQLNILEVK (69 aa). The tract at residues 215 to 278 is disordered; it reads AAAAPAGADR…AAGQPETTES (64 aa). Positions 238–278 are enriched in low complexity; the sequence is SGASGTTATSTDAGRAATEEAPATDAAATAPAAGQPETTES.

The protein belongs to the universal ribosomal protein uS3 family. As to quaternary structure, part of the 30S ribosomal subunit. Forms a tight complex with proteins S10 and S14.

Its function is as follows. Binds the lower part of the 30S subunit head. Binds mRNA in the 70S ribosome, positioning it for translation. The polypeptide is Small ribosomal subunit protein uS3 (Mycolicibacterium gilvum (strain PYR-GCK) (Mycobacterium gilvum (strain PYR-GCK))).